Reading from the N-terminus, the 478-residue chain is Endoplasmic reticulum oxidoreductin-1 (478 aa).

A signal peptide spans 1-20; that stretch reads MREPLLQLIVLSLIIIVVNT. Cystine bridges form between Cys-28–Cys-41, Cys-30–Cys-39, Cys-79–Cys-384, Cys-88–Cys-93, Cys-209–Cys-230, and Cys-387–Cys-390. Residues 117–143 form a disordered region; the sequence is AAVKEEEDDDAEKCADAGNNIDPMDRT. Residues Arg-188, Thr-190, and Trp-201 each coordinate FAD. FAD contacts are provided by Ser-241, His-244, Arg-283, and Arg-295. The N-linked (GlcNAc...) asparagine glycan is linked to Asn-377. Positions 459–478 are disordered; sequence ESVMNTAADGPPRKSNKIDL.

This sequence belongs to the EROs family. As to quaternary structure, may function both as a monomer and a homodimer. FAD is required as a cofactor.

It localises to the endoplasmic reticulum membrane. Its function is as follows. Oxidoreductase involved in disulfide bond formation in the endoplasmic reticulum. Efficiently reoxidizes pdi-1, the enzyme catalyzing protein disulfide formation, in order to allow pdi-1 to sustain additional rounds of disulfide formation. Following pdi reoxidation, passes its electrons to molecular oxygen via FAD, leading to the production of reactive oxygen species (ROS) in the cell. This chain is Endoplasmic reticulum oxidoreductin-1 (ero-1), found in Caenorhabditis elegans.